A 407-amino-acid polypeptide reads, in one-letter code: Transmembrane protein 184B (407 aa).

Positions 1-28 are enriched in low complexity; it reads MTVRGAALAPDPASPTTTTASPSVSATP. The segment at 1–31 is disordered; it reads MTVRGAALAPDPASPTTTTASPSVSATPEGS. The next 7 helical transmembrane spans lie at 40–60, 84–104, 121–141, 178–198, 214–234, 249–269, and 290–310; these read FLMT…ALLI, ILFI…FFTN, FVIY…SAIM, LQFC…QAFG, VTII…LFYF, FFMV…LAIL, and VAAG…ALAL. Positions 369-395 are disordered; that stretch reads TLEPGPTWRGGTHSLSRSHSLSGARDN. Residues Ser-388, Ser-402, and Ser-403 each carry the phosphoserine modification.

It belongs to the TMEM184 family.

The protein localises to the membrane. Functionally, may activate the MAP kinase signaling pathway. In Mus musculus (Mouse), this protein is Transmembrane protein 184B (Tmem184b).